Here is a 730-residue protein sequence, read N- to C-terminus: Polyribonucleotide nucleotidyltransferase (730 aa).

Mg(2+)-binding residues include Asp489 and Asp495. The 60-residue stretch at 556–615 folds into the KH domain; the sequence is PKIDTIKVDVDKIKIVIGKGGETIDKIIEETGVKIDIDEDGNIAIYSSDQEAINRTKEII. Positions 625 to 693 constitute an S1 motif domain; that stretch reads GEIYEAEVVR…DKGRIDASMK (69 aa). Residues 691–730 form a disordered region; it reads SMKALLPRPPRSEKSNKEDHQSVRHHGSPKDDKGKEKYDK. The segment covering 700-730 has biased composition (basic and acidic residues); the sequence is PRSEKSNKEDHQSVRHHGSPKDDKGKEKYDK.

Belongs to the polyribonucleotide nucleotidyltransferase family. Mg(2+) is required as a cofactor.

The protein localises to the cytoplasm. It catalyses the reaction RNA(n+1) + phosphate = RNA(n) + a ribonucleoside 5'-diphosphate. Involved in mRNA degradation. Catalyzes the phosphorolysis of single-stranded polyribonucleotides processively in the 3'- to 5'-direction. This is Polyribonucleotide nucleotidyltransferase from Streptococcus mutans serotype c (strain ATCC 700610 / UA159).